We begin with the raw amino-acid sequence, 616 residues long: MALLQISEPGLSAAPHQRRLAAGIDLGTTNSLVATVRSGQAETLADHDGRHLLPSVVHYQQQGHTVGYAARANAAQDTANTISSVKRMMGRSLADIQTRYPHLPYQFQASENGLPMIETAAGLLNPVRISADILKALAARATEALSGELDGVVITVPAYFDDAQRQGTKDAARLAGLHVLRLLNEPTAAAIAYGLDSGKEGVIAVYDLGGGTFDISILRLSRGVFEVLATGGDSALGGDDFDHLLADYIREQAGIADRSDNRVQRELLDAAIAAKIALSDADSVSVNVAGWQGDITREQFNDLIAALVKRTLMACRRALKDAGVEAQEVLEVVMVGGSTRVPLVRERVGEFFGRPPLTAIDPDKVVAIGAAIQADILVGNKPDSEMLLLDVIPLSLGLETMGGLVEKVIPRNTTIPVARAQDFTTFKDGQTAMSIHVMQGERELVQDCRSLARFALRGLPAMPAGGAHIRVTFQVDADGLLSVTAMEKSTGVEASIQVKPSYGLTDSEIATMIQDSMSFAEQDVKARMLAEQKVEAARVLESLTGALAADAALLSAAERQVIDDAAAHLSEVAQSDDGDAIEQAIKNVDKQTQEFAARRMDKSVRRALQGHSVDEV.

This sequence belongs to the heat shock protein 70 family.

Functionally, chaperone involved in the maturation of iron-sulfur cluster-containing proteins. Has a low intrinsic ATPase activity which is markedly stimulated by HscB. Involved in the maturation of IscU. The sequence is that of Chaperone protein HscA from Citrobacter koseri (strain ATCC BAA-895 / CDC 4225-83 / SGSC4696).